The sequence spans 378 residues: SWI/SNF-related matrix-associated actin-dependent regulator of chromatin subfamily B member 1 (378 aa).

The segment at 1–106 (MIMALSKTFG…DEKYKAVSIS (106 aa)) is DNA-binding.

The protein belongs to the SNF5 family. Component of the multiprotein chromatin-remodeling complexes SWI/SNF. Component of neural progenitors-specific chromatin remodeling complex (npBAF complex) and the neuron-specific chromatin remodeling complex (nBAF complex). Component of the BAF (SWI/SNF) chromatin remodeling complex. Component of the SWI/SNF-B (PBAF) chromatin remodeling complex. Binds to double-stranded DNA.

The protein localises to the nucleus. Functionally, involved in chromatin-remodeling. Core component of the BAF (SWI/SNF) complex. This ATP-dependent chromatin-remodeling complex plays important roles in cell proliferation and differentiation, in cellular antiviral activities and inhibition of tumor formation. Belongs to the neural progenitors-specific chromatin remodeling complex (npBAF complex) and the neuron-specific chromatin remodeling complex (nBAF complex) and may play a role in neural development. This Xenopus tropicalis (Western clawed frog) protein is SWI/SNF-related matrix-associated actin-dependent regulator of chromatin subfamily B member 1 (smarcb1).